Here is a 3567-residue protein sequence, read N- to C-terminus: Zinc finger homeobox protein 4 (3567 aa).

The residue at position 1 (M1) is an N-acetylmethionine. Disordered stretches follow at residues 1-54 (METC…LKTD), 425-480 (LSHS…AYSN), 522-545 (TSSSSATVSDDTEKKKQTAAVRAS), and 565-611 (SKDS…SPGS). A compositionally biased stretch (polar residues) spans 9-28 (ISRQENGQSTSKLCGTTQLD). Basic and acidic residues-rich tracts occupy residues 39–54 (EPDRENSSTDDNLKTD) and 434–452 (KMSESKDQENNCERPKESN). Positions 468 to 480 (EPGDEDEEDAYSN) are enriched in acidic residues. 3 consecutive C2H2-type zinc fingers follow at residues 613 to 636 (IECPKCDTVLGSSRSLGGHMTMMH), 644 to 667 (LKCPKCNWHYKYQQTLEAHMKEKH), and 699 to 723 (FRCEVCNYSTTTKGNLSIHMQSDKH). A C2H2-type 4; degenerate zinc finger spans residues 767–789 (WRCEVCDYETNVARNLRIHMTSE). C2H2-type zinc fingers lie at residues 917–941 (YQCKLCNYNTQLKANFQLHCKTDKH), 973–995 (LKCNACDYYTNSVDKLRLHTTNH), and 1021–1045 (YYCAVCDYTTKVKLNLVQHVRSVKH). Residues 1098–1160 (EQHEEAEGAI…EDVATKRSKP (63 aa)) are disordered. 2 stretches are compositionally biased toward basic and acidic residues: residues 1120–1132 (TSERDNSEGKNSN) and 1148–1160 (AKEEDVATKRSKP). K1149 is covalently cross-linked (Glycyl lysine isopeptide (Lys-Gly) (interchain with G-Cter in SUMO2)). 2 C2H2-type zinc fingers span residues 1172 to 1195 (YQCPYCNYNSRDQSRIQMHVLSQH) and 1201 to 1224 (ICCPLCQDVLSNKMHLQLHLTHLH). The disordered stretch occupies residues 1254–1324 (AASEKSERDT…WNKNSSKDVK (71 aa)). The segment covering 1281 to 1310 (MDDKSMAGLEDSKANVEVKNEEQKPTKEPL) has biased composition (basic and acidic residues). Residues K1299 and K1324 each participate in a glycyl lysine isopeptide (Lys-Gly) (interchain with G-Cter in SUMO2) cross-link. 2 C2H2-type zinc fingers span residues 1352 to 1374 (YRCNHCSLAFKTMQKLQIHSQYH) and 1380 to 1403 (TMCNLCQRSFRTFQALKKHLEAGH). Residues 1429–1480 (ETMSQDDHGLEQEMEREYEVDHEGKASPVGSDSSSIPDDMGSEPKRTLPFRK) are disordered. Residues 1433–1453 (QDDHGLEQEMEREYEVDHEGK) show a composition bias toward basic and acidic residues. The C2H2-type 12 zinc-finger motif lies at 1496 to 1522 (YKCTVCKESFTQKNILLVHYNSVSHLH). K1546 participates in a covalent cross-link: Glycyl lysine isopeptide (Lys-Gly) (interchain with G-Cter in SUMO2). The C2H2-type 13 zinc-finger motif lies at 1548-1572 (YKCSICNVAYSQSSTLEIHMRSVLH). Composition is skewed to low complexity over residues 1761 to 1772 (TQPQLQPQKQQQ) and 1779 to 1791 (QQQQQQASKLLKQ). Disordered regions lie at residues 1761 to 1791 (TQPQLQPQKQQQQPPPPQQQQQQQASKLLKQ) and 1809 to 1858 (SYKE…IASG). K1790 participates in a covalent cross-link: Glycyl lysine isopeptide (Lys-Gly) (interchain with G-Cter in SUMO2). The segment covering 1809 to 1845 (SYKEAEDISEKPEKPKQEFISEGEGLKEGKDTKKQKS) has biased composition (basic and acidic residues). Residues 1901-1924 (LECGTCGKLFSNVLILKSHQEHVH) form a C2H2-type 14 zinc finger. The disordered stretch occupies residues 1948–2024 (YPISPSSPET…PPSAPPQVQL (77 aa)). Composition is skewed to pro residues over residues 1955-1974 (PETPPPPPPPPPLPPAPPQP) and 1991-2019 (QAPPPTPPPPPPPPPPPPPPPPPPPPSAP). 2 consecutive DNA-binding regions (homeobox) follow at residues 2084 to 2143 (FKRP…RQRN) and 2181 to 2240 (KRSS…RKSY). The C2H2-type 15; degenerate zinc-finger motif lies at 2267–2291 (YQCKKCNVVFPRIFDLITHQKKQCY). 2 disordered regions span residues 2289–2311 (QCYKDEDDDAQDESQTEDSMDAT) and 2328–2431 (AKNA…SPLQ). The span at 2293–2309 (DEDDDAQDESQTEDSMD) shows a compositional bias: acidic residues. Over residues 2331–2345 (AAAPAASSGSGTSTP) the composition is skewed to low complexity. Over residues 2352-2370 (PEPEKTSPKPEYPAEKPKQ) the composition is skewed to basic and acidic residues. The segment covering 2419-2431 (SASQTPVPSSPLQ) has biased composition (polar residues). The C2H2-type 16 zinc-finger motif lies at 2448 to 2470 (YQCDQCTVAFPTLELWQEHQHMH). A compositionally biased stretch (polar residues) spans 2507 to 2530 (LGSSLTQMPPQASSSHTTAPTTVA). The tract at residues 2507–2564 (LGSSLTQMPPQASSSHTTAPTTVAASLKRKLDDKEDNNCSEKEGGNSGEDQHRDKRLR) is disordered. The span at 2535 to 2559 (RKLDDKEDNNCSEKEGGNSGEDQHR) shows a compositional bias: basic and acidic residues. Residues 2560–2619 (DKRLRTTITPEQLEILYEKYLLDSNPTRKMLDHIAREVGLKKRVVQVWFQNTRARERKGQ) constitute a DNA-binding region (homeobox 3). The C2H2-type 17 zinc-finger motif lies at 2630 to 2653 (KRCPFCRALFKAKSALESHIRSRH). The residue at position 2663 (S2663) is a Phosphoserine. The span at 2764-2785 (AISDATTGDEGNTEMESTTGSS) shows a compositional bias: polar residues. 2 disordered regions span residues 2764–2811 (AISD…TTPT) and 2829–2885 (HFND…PGHK). Residues 2830 to 2839 (FNDKDGDHDQ) show a composition bias toward basic and acidic residues. Low complexity predominate over residues 2862 to 2874 (PSSPNPFGSSNPF). Residues 2884-2943 (HKRFRTQMSNLQLKVLKACFSDYRTPTMQECEMLGNEIGLPKRVVQVWFQNARAKEKKFK) constitute a DNA-binding region (homeobox 4). The C2H2-type 18 zinc finger occupies 2962-2986 (PECTLCGVKYSARLSIRDHIFSKQH). Residues 3092–3110 (SATSSPALSLSSAPTKPLL) are compositionally biased toward low complexity. 2 disordered regions span residues 3092–3172 (SATS…KEEK) and 3281–3337 (LQKQ…LESK). Positions 3111–3125 (QTPPPPPPPPPPPPS) are enriched in pro residues. The segment covering 3126–3135 (SSLSGQQTEQ) has biased composition (polar residues). The span at 3153-3172 (IKEEELEATKPEKHPKKEEK) shows a compositional bias: basic and acidic residues. K3154 is covalently cross-linked (Glycyl lysine isopeptide (Lys-Gly) (interchain with G-Cter in SUMO2)). Positions 3265 to 3294 (ALLQQYQQYQQNLQESLQKQQKQQQEQQQK) form a coiled coil. A compositionally biased stretch (low complexity) spans 3281–3293 (LQKQQKQQQEQQQ). Residues 3294–3314 (KPVQAKTSKVESDQPQNSNDA) show a composition bias toward polar residues. The span at 3315 to 3337 (SETKEDKSTATESTKEEPQLESK) shows a compositional bias: basic and acidic residues. The C2H2-type 19; degenerate zinc finger occupies 3354–3378 (FICRKCQMMFTDEDAAVNHQKSFCY). The segment at 3398–3422 (YQCLACDVAISGNEALSQHLQSSLH) adopts a C2H2-type 20 zinc-finger fold. Disordered stretches follow at residues 3443-3462 (HSVCSPNPNTTSTSQSAASS) and 3511-3534 (STSGVQTSLPTESCSDESDSELSQ). Residues 3447-3462 (SPNPNTTSTSQSAASS) are compositionally biased toward low complexity.

This sequence belongs to the krueppel C2H2-type zinc-finger protein family. Expressed in brain, skeletal muscle and liver. Very low expression in stomach.

The protein localises to the nucleus. Functionally, may play a role in neural and muscle differentiation. May be involved in transcriptional regulation. The protein is Zinc finger homeobox protein 4 (ZFHX4) of Homo sapiens (Human).